A 730-amino-acid polypeptide reads, in one-letter code: Zinc finger protein 615 (730 aa).

The KRAB domain occupies 7–78; the sequence is LTLEDVAVDF…EDEIYSRICF (72 aa). 19 C2H2-type zinc fingers span residues 203–225, 231–253, 259–281, 287–309, 315–337, 343–365, 371–393, 399–421, 427–449, 455–477, 483–505, 511–533, 539–561, 567–589, 595–617, 623–645, 651–673, 679–701, and 707–729; these read HVCS…QRVH, HVCS…QRTH, YECT…QKTH, YTCS…QRTH, HGCS…QKTH, YICS…HRTH, FICN…QQTH, YKCN…QRTH, YVCT…QRTH, YICN…QRTH, YVCG…QRTH, YICD…RRTH, YVCS…QRTH, YICN…QQTH, YKCN…QRFH, FACT…QRIH, YKCS…QRKH, and YGCS…KRIH.

The protein belongs to the krueppel C2H2-type zinc-finger protein family.

It localises to the nucleus. In terms of biological role, may be involved in transcriptional regulation. The protein is Zinc finger protein 615 (ZNF615) of Pongo abelii (Sumatran orangutan).